A 196-amino-acid chain; its full sequence is Small ribosomal subunit protein uS4m (196 aa).

The S4 RNA-binding domain maps to Lys88 to Gln154.

It belongs to the universal ribosomal protein uS4 family.

It is found in the mitochondrion. The chain is Small ribosomal subunit protein uS4m (RPS4) from Marchantia polymorpha (Common liverwort).